The primary structure comprises 490 residues: Chromosomal replication initiator protein DnaA (490 aa).

Positions 1-91 are domain I, interacts with DnaA modulators; it reads MTMKGGVASQ…GELWAAHDAT (91 aa). Residues 91-147 are domain II; it reads TGRRIDLKSRLEFEAAAGAYVEATPKAVAAEPIEIVLPVSTDAPTVVAPSAKSPRTQ. Residues 148-370 are domain III, AAA+ region; sequence GLQERFTFET…GALNTLSARA (223 aa). Positions 192, 194, 195, and 196 each coordinate ATP. The interval 371-490 is domain IV, binds dsDNA; it reads GEGLSRMTLD…LETLTRKLRG (120 aa).

Belongs to the DnaA family. In terms of assembly, oligomerizes as a right-handed, spiral filament on DNA at oriC.

The protein resides in the cytoplasm. Plays an essential role in the initiation and regulation of chromosomal replication. ATP-DnaA binds to the origin of replication (oriC) to initiate formation of the DNA replication initiation complex once per cell cycle. Binds the DnaA box (a 9 base pair repeat at the origin) and separates the double-stranded (ds)DNA. Forms a right-handed helical filament on oriC DNA; dsDNA binds to the exterior of the filament while single-stranded (ss)DNA is stabiized in the filament's interior. The ATP-DnaA-oriC complex binds and stabilizes one strand of the AT-rich DNA unwinding element (DUE), permitting loading of DNA polymerase. After initiation quickly degrades to an ADP-DnaA complex that is not apt for DNA replication. Binds acidic phospholipids. This chain is Chromosomal replication initiator protein DnaA, found in Caulobacter vibrioides (strain ATCC 19089 / CIP 103742 / CB 15) (Caulobacter crescentus).